Here is a 243-residue protein sequence, read N- to C-terminus: MKIINLDSKNLASFYVACELFKQIQQHPHAKLGLATGGTMTDVYHYLVNLLIKNKVDVSQVETFNLDEYVGLKASHQQSYHTYMNKVLFEQYPHFVKNHIHIPDGLSENLEAEAERYNNLLDERGPIDIQILGIGENGHIGFNEPGTDFNSETHVVNLTESTIKANSRFFDNEKDVPRQAVSMGVKSILKAKRIILLAFGPKKKEAISKLLNEQVTEDVPATILHTHPNVEVYVDDEAAPDCL.

The active-site Proton acceptor; for enolization step is Asp67. Asn137 functions as the For ring-opening step in the catalytic mechanism. His139 (proton acceptor; for ring-opening step) is an active-site residue. Catalysis depends on Glu144, which acts as the For ring-opening step.

Belongs to the glucosamine/galactosamine-6-phosphate isomerase family. NagB subfamily.

The catalysed reaction is alpha-D-glucosamine 6-phosphate + H2O = beta-D-fructose 6-phosphate + NH4(+). The protein operates within amino-sugar metabolism; N-acetylneuraminate degradation; D-fructose 6-phosphate from N-acetylneuraminate: step 5/5. Functionally, catalyzes the reversible isomerization-deamination of glucosamine 6-phosphate (GlcN6P) to form fructose 6-phosphate (Fru6P) and ammonium ion. This Staphylococcus epidermidis (strain ATCC 12228 / FDA PCI 1200) protein is Glucosamine-6-phosphate deaminase.